Reading from the N-terminus, the 210-residue chain is Ribonuclease HII (210 aa).

An RNase H type-2 domain is found at 2–203 (SGVMGIDEAG…YKRVESEVKQ (202 aa)). Residues D8, E9, and D99 each contribute to the a divalent metal cation site.

This sequence belongs to the RNase HII family. The cofactor is Mn(2+). Requires Mg(2+) as cofactor.

It is found in the cytoplasm. The enzyme catalyses Endonucleolytic cleavage to 5'-phosphomonoester.. In terms of biological role, endonuclease that specifically degrades the RNA of RNA-DNA hybrids. The sequence is that of Ribonuclease HII from Methanopyrus kandleri (strain AV19 / DSM 6324 / JCM 9639 / NBRC 100938).